A 51-amino-acid polypeptide reads, in one-letter code: Large ribosomal subunit protein bL33 (51 aa).

Belongs to the bacterial ribosomal protein bL33 family.

The protein is Large ribosomal subunit protein bL33 of Hahella chejuensis (strain KCTC 2396).